The sequence spans 217 residues: Probable nicotinate-nucleotide adenylyltransferase (217 aa).

This sequence belongs to the NadD family.

The catalysed reaction is nicotinate beta-D-ribonucleotide + ATP + H(+) = deamido-NAD(+) + diphosphate. The protein operates within cofactor biosynthesis; NAD(+) biosynthesis; deamido-NAD(+) from nicotinate D-ribonucleotide: step 1/1. Catalyzes the reversible adenylation of nicotinate mononucleotide (NaMN) to nicotinic acid adenine dinucleotide (NaAD). The sequence is that of Probable nicotinate-nucleotide adenylyltransferase from Moorella thermoacetica (strain ATCC 39073 / JCM 9320).